Consider the following 308-residue polypeptide: Mitoferrin (308 aa).

6 helical membrane passes run 13–29 (GGSF…AGFA), 69–89 (ITGL…SHAV), 111–131 (IKVG…ASPM), 168–184 (YTTT…VYFA), 213–233 (LVAG…FDVV), and 285–302 (MVFH…YEYF). 3 Solcar repeats span residues 14–100 (GSFY…LKFK), 108–192 (HHPI…LKKI), and 207–305 (YQLI…FKFI).

This sequence belongs to the mitochondrial carrier (TC 2.A.29) family.

Its subcellular location is the mitochondrion inner membrane. Its function is as follows. Mitochondrial solute carriers shuttle metabolites, nucleotides, and cofactors through the mitochondrial inner membrane. Mitochondrial iron transporter that mediates iron uptake. Probably required for heme synthesis of hemoproteins and Fe-S cluster assembly. This is Mitoferrin (mcfF) from Dictyostelium discoideum (Social amoeba).